The chain runs to 372 residues: N-methyl-L-tryptophan oxidase (372 aa).

Aspartate 4 to histidine 34 is an FAD binding site. Residue cysteine 308 is modified to S-8alpha-FAD cysteine.

Belongs to the MSOX/MTOX family. MTOX subfamily. As to quaternary structure, monomer. Requires FAD as cofactor.

The catalysed reaction is N(alpha)-methyl-L-tryptophan + O2 + H2O = L-tryptophan + formaldehyde + H2O2. Catalyzes the oxidative demethylation of N-methyl-L-tryptophan. The protein is N-methyl-L-tryptophan oxidase of Shigella dysenteriae serotype 1 (strain Sd197).